We begin with the raw amino-acid sequence, 311 residues long: MTLHGPLGLLDTARELRGFRTEPAQMRAGAPGKVGRLRLGFSLRDGVSVLHDLYRVAPLLVQQALYWDEAMPDLPVCPIISVGGGILQGDRYTIDITVGEGACAHVSTQGANRIHCMDANYAAQHQNVTVEAGGYLEYLPDVTIPYRGSRFLSRTEIVVAEDATLLYGEMVLAGRKHHHAEERFGFDLLSMDVTLRRPGGRKLFAEKILIERGDPTIAFAAVMRGFDVFANILCVTPPGTAARIKERFETNFSSDAPRAVSGVSRLPNAAGLMLRAVGVETYDVRNEVRRFWRIVREEVRGRPLPAEPYWR.

This sequence belongs to the UreD family. In terms of assembly, ureD, UreF and UreG form a complex that acts as a GTP-hydrolysis-dependent molecular chaperone, activating the urease apoprotein by helping to assemble the nickel containing metallocenter of UreC. The UreE protein probably delivers the nickel.

It is found in the cytoplasm. Functionally, required for maturation of urease via the functional incorporation of the urease nickel metallocenter. The protein is Urease accessory protein UreD 3 of Methylorubrum populi (strain ATCC BAA-705 / NCIMB 13946 / BJ001) (Methylobacterium populi).